The primary structure comprises 177 residues: Cytochrome c oxidase assembly protein CtaG (177 aa).

Topologically, residues 1–8 (MTQKAKNT) are cytoplasmic. A helical; Signal-anchor for type II membrane protein transmembrane segment spans residues 9–29 (IYLLILIILSMLCLVYASVPL). The Periplasmic portion of the chain corresponds to 30–177 (YSIFCKVTGY…TFFKYKETTK (148 aa)).

Belongs to the COX11/CtaG family.

The protein resides in the cell inner membrane. In terms of biological role, exerts its effect at some terminal stage of cytochrome c oxidase synthesis, probably by being involved in the insertion of the copper B into subunit I. This chain is Cytochrome c oxidase assembly protein CtaG, found in Ehrlichia ruminantium (strain Gardel).